The chain runs to 350 residues: Pleckstrin (350 aa).

Residues 4 to 101 (KRIREGYLVK…WVRDIKKAIK (98 aa)) form the PH 1 domain. An N6-acetyllysine modification is found at Lys-64. Phosphoserine occurs at positions 113 and 117. A DEP domain is found at 136 to 221 (PEKGIKELNL…NPDAFYYFPD (86 aa)). Positions 244 to 347 (IIIKQGCLLK…WIKAIQVASR (104 aa)) constitute a PH 2 domain.

Its function is as follows. Major protein kinase C substrate of platelets. This is Pleckstrin (Plek) from Rattus norvegicus (Rat).